Here is a 322-residue protein sequence, read N- to C-terminus: Phosphatidylserine decarboxylase proenzyme (322 aa).

Active-site charge relay system; for autoendoproteolytic cleavage activity residues include Asp90, His147, and Ser254. Ser254 acts as the Schiff-base intermediate with substrate; via pyruvic acid; for decarboxylase activity in catalysis. Ser254 bears the Pyruvic acid (Ser); by autocatalysis mark. The tract at residues Glu294–Thr322 is disordered. The span at Glu303–Thr322 shows a compositional bias: basic and acidic residues.

This sequence belongs to the phosphatidylserine decarboxylase family. PSD-B subfamily. Prokaryotic type I sub-subfamily. As to quaternary structure, heterodimer of a large membrane-associated beta subunit and a small pyruvoyl-containing alpha subunit. Pyruvate is required as a cofactor. Post-translationally, is synthesized initially as an inactive proenzyme. Formation of the active enzyme involves a self-maturation process in which the active site pyruvoyl group is generated from an internal serine residue via an autocatalytic post-translational modification. Two non-identical subunits are generated from the proenzyme in this reaction, and the pyruvate is formed at the N-terminus of the alpha chain, which is derived from the carboxyl end of the proenzyme. The autoendoproteolytic cleavage occurs by a canonical serine protease mechanism, in which the side chain hydroxyl group of the serine supplies its oxygen atom to form the C-terminus of the beta chain, while the remainder of the serine residue undergoes an oxidative deamination to produce ammonia and the pyruvoyl prosthetic group on the alpha chain. During this reaction, the Ser that is part of the protease active site of the proenzyme becomes the pyruvoyl prosthetic group, which constitutes an essential element of the active site of the mature decarboxylase.

The protein resides in the cell membrane. The enzyme catalyses a 1,2-diacyl-sn-glycero-3-phospho-L-serine + H(+) = a 1,2-diacyl-sn-glycero-3-phosphoethanolamine + CO2. It functions in the pathway phospholipid metabolism; phosphatidylethanolamine biosynthesis; phosphatidylethanolamine from CDP-diacylglycerol: step 2/2. In terms of biological role, catalyzes the formation of phosphatidylethanolamine (PtdEtn) from phosphatidylserine (PtdSer). The sequence is that of Phosphatidylserine decarboxylase proenzyme from Salmonella arizonae (strain ATCC BAA-731 / CDC346-86 / RSK2980).